We begin with the raw amino-acid sequence, 323 residues long: Trihelix transcription factor GT-3a (323 aa).

Residues methionine 1–leucine 20 show a composition bias toward basic residues. The segment at methionine 1 to glutamine 51 is disordered. A Myb-like domain is found at tryptophan 52–valine 108. Disordered regions lie at residues glutamate 147–glutamine 176, lysine 190–alanine 220, and glutamate 269–glutamine 297. Residues serine 164–glutamine 176 show a composition bias toward acidic residues.

Homodimer. Heterodimer with GT-3B. As to expression, predominantly expressed in roots and flower buds.

Its subcellular location is the nucleus. Functionally, probable transcription factor that binds specifically to the core DNA sequence 5'-GTTAC-3'. This is Trihelix transcription factor GT-3a (GT-3A) from Arabidopsis thaliana (Mouse-ear cress).